A 341-amino-acid polypeptide reads, in one-letter code: Glycerol-3-phosphate dehydrogenase [NAD(P)+] (341 aa).

The NADPH site is built by serine 14, phenylalanine 15, arginine 35, and lysine 108. Residues lysine 108 and glycine 136 each contribute to the sn-glycerol 3-phosphate site. NADPH is bound at residue alanine 140. Sn-glycerol 3-phosphate-binding residues include lysine 191, aspartate 244, serine 254, arginine 255, and asparagine 256. The Proton acceptor role is filled by lysine 191. Arginine 255 is a binding site for NADPH. The NADPH site is built by valine 279 and glutamate 281.

The protein belongs to the NAD-dependent glycerol-3-phosphate dehydrogenase family.

It is found in the cytoplasm. It catalyses the reaction sn-glycerol 3-phosphate + NAD(+) = dihydroxyacetone phosphate + NADH + H(+). The catalysed reaction is sn-glycerol 3-phosphate + NADP(+) = dihydroxyacetone phosphate + NADPH + H(+). Its pathway is membrane lipid metabolism; glycerophospholipid metabolism. In terms of biological role, catalyzes the reduction of the glycolytic intermediate dihydroxyacetone phosphate (DHAP) to sn-glycerol 3-phosphate (G3P), the key precursor for phospholipid synthesis. This Pseudomonas syringae pv. syringae (strain B728a) protein is Glycerol-3-phosphate dehydrogenase [NAD(P)+].